We begin with the raw amino-acid sequence, 644 residues long: Probable potassium transport system protein Kup 2 (644 aa).

The segment at 1-21 is disordered; that stretch reads MSSDAAAVADRDGSSPGHGGH. 12 helical membrane-spanning segments follow: residues 26–46, 69–89, 120–140, 155–175, 183–203, 231–251, 265–285, 312–332, 360–380, 390–410, 419–439, and 444–464; these read LGAM…TSPL, VLSL…VAII, IILL…ITPA, AGFA…LFMI, VGML…VLGT, LAFL…ALYA, WLVF…AMIL, LVIL…TGAF, IYIP…VMSF, YGIA…VVLI, LAAP…GANL, and DGGW…TTWG.

This sequence belongs to the HAK/KUP transporter (TC 2.A.72) family.

The protein localises to the cell inner membrane. It catalyses the reaction K(+)(in) + H(+)(in) = K(+)(out) + H(+)(out). Functionally, transport of potassium into the cell. Likely operates as a K(+):H(+) symporter. The sequence is that of Probable potassium transport system protein Kup 2 from Rhizorhabdus wittichii (strain DSM 6014 / CCUG 31198 / JCM 15750 / NBRC 105917 / EY 4224 / RW1) (Sphingomonas wittichii).